Here is a 655-residue protein sequence, read N- to C-terminus: Kelch-like protein 13 (655 aa).

The BTB domain maps to 92–161; sequence CDVTLMPGDT…IYTAKLSLNM (70 aa). Positions 196–297 constitute a BACK domain; it reads CVEVGRIANT…TPQELINYVQ (102 aa). Kelch repeat units lie at residues 341-389, 390-441, 442-488, 490-535, 537-587, and 588-636; these read HLVT…VIGN, FLYV…ALKG, YLYA…VYGG, MYIS…TVGE, LYVI…VFEN, and KIYV…TLTV.

In terms of assembly, component of the BCR(KLHL9-KLHL13) E3 ubiquitin ligase complex, at least composed of CUL3, KLHL9, KLHL13 and RBX1. Interacts with AURKB.

Its pathway is protein modification; protein ubiquitination. Its function is as follows. Substrate-specific adapter of a BCR (BTB-CUL3-RBX1) E3 ubiquitin-protein ligase complex required for mitotic progression and cytokinesis. The BCR(KLHL9-KLHL13) E3 ubiquitin ligase complex mediates the ubiquitination of AURKB and controls the dynamic behavior of AURKB on mitotic chromosomes and thereby coordinates faithful mitotic progression and completion of cytokinesis. This is Kelch-like protein 13 (KLHL13) from Bos taurus (Bovine).